The chain runs to 29 residues: Brevinin-2Ee (29 aa).

Cys23 and Cys29 form a disulfide bridge.

This sequence belongs to the frog skin active peptide (FSAP) family. Brevinin subfamily. In terms of tissue distribution, expressed by the skin glands.

The protein resides in the secreted. In terms of biological role, shows antibacterial activity against representative Gram-negative and Gram-positive bacterial species, and hemolytic activity. The chain is Brevinin-2Ee from Pelophylax lessonae (Pool frog).